The following is a 241-amino-acid chain: Methylthioribulose-1-phosphate dehydratase (241 aa).

Residues 1–20 form a disordered region; it reads MSAIKDERNNDHLVQSHDPE. Cysteine 100 lines the substrate pocket. Zn(2+)-binding residues include histidine 117 and histidine 119. Residue glutamate 146 is the Proton donor/acceptor of the active site. Histidine 202 provides a ligand contact to Zn(2+).

Belongs to the aldolase class II family. MtnB subfamily. Zn(2+) is required as a cofactor.

Its subcellular location is the cytoplasm. The catalysed reaction is 5-(methylsulfanyl)-D-ribulose 1-phosphate = 5-methylsulfanyl-2,3-dioxopentyl phosphate + H2O. Its pathway is amino-acid biosynthesis; L-methionine biosynthesis via salvage pathway; L-methionine from S-methyl-5-thio-alpha-D-ribose 1-phosphate: step 2/6. Functionally, catalyzes the dehydration of methylthioribulose-1-phosphate (MTRu-1-P) into 2,3-diketo-5-methylthiopentyl-1-phosphate (DK-MTP-1-P). The chain is Methylthioribulose-1-phosphate dehydratase from Blastomyces gilchristii (strain SLH14081) (Blastomyces dermatitidis).